Reading from the N-terminus, the 280-residue chain is Thymidylate synthase (280 aa).

Arginine 21 contacts dUMP. Histidine 51 contacts (6R)-5,10-methylene-5,6,7,8-tetrahydrofolate. 142–143 is a binding site for dUMP; the sequence is RR. Residue cysteine 162 is the Nucleophile of the active site. Residues 182 to 185, asparagine 193, and 223 to 225 each bind dUMP; these read RSAD and HLY. Residue aspartate 185 coordinates (6R)-5,10-methylene-5,6,7,8-tetrahydrofolate. Alanine 279 is a (6R)-5,10-methylene-5,6,7,8-tetrahydrofolate binding site.

It belongs to the thymidylate synthase family. Bacterial-type ThyA subfamily. Homodimer.

Its subcellular location is the cytoplasm. The catalysed reaction is dUMP + (6R)-5,10-methylene-5,6,7,8-tetrahydrofolate = 7,8-dihydrofolate + dTMP. The protein operates within pyrimidine metabolism; dTTP biosynthesis. In terms of biological role, catalyzes the reductive methylation of 2'-deoxyuridine-5'-monophosphate (dUMP) to 2'-deoxythymidine-5'-monophosphate (dTMP) while utilizing 5,10-methylenetetrahydrofolate (mTHF) as the methyl donor and reductant in the reaction, yielding dihydrofolate (DHF) as a by-product. This enzymatic reaction provides an intracellular de novo source of dTMP, an essential precursor for DNA biosynthesis. This chain is Thymidylate synthase, found in Acinetobacter baumannii (strain AB307-0294).